Reading from the N-terminus, the 208-residue chain is ATP-dependent Clp protease proteolytic subunit (208 aa).

Residue Ser105 is the Nucleophile of the active site. His130 is a catalytic residue.

The protein belongs to the peptidase S14 family. As to quaternary structure, fourteen ClpP subunits assemble into 2 heptameric rings which stack back to back to give a disk-like structure with a central cavity, resembling the structure of eukaryotic proteasomes.

Its subcellular location is the cytoplasm. The enzyme catalyses Hydrolysis of proteins to small peptides in the presence of ATP and magnesium. alpha-casein is the usual test substrate. In the absence of ATP, only oligopeptides shorter than five residues are hydrolyzed (such as succinyl-Leu-Tyr-|-NHMec, and Leu-Tyr-Leu-|-Tyr-Trp, in which cleavage of the -Tyr-|-Leu- and -Tyr-|-Trp bonds also occurs).. Functionally, cleaves peptides in various proteins in a process that requires ATP hydrolysis. Has a chymotrypsin-like activity. Plays a major role in the degradation of misfolded proteins. This is ATP-dependent Clp protease proteolytic subunit from Xanthomonas campestris pv. campestris (strain 8004).